A 158-amino-acid polypeptide reads, in one-letter code: Snaclec agglucetin subunit alpha-2 (158 aa).

A signal peptide spans 1–23; that stretch reads MGRFIFVSFGLLVVFLSLSGTGA. 3 cysteine pairs are disulfide-bonded: Cys-27/Cys-38, Cys-55/Cys-152, and Cys-127/Cys-144. The C-type lectin domain occupies 34-153; that stretch reads YDQYCYQVIK…CIQLNPFVCK (120 aa).

It belongs to the snaclec family. In terms of assembly, heterotetramer of the subunits alpha-1, alpha-2, beta-1 and beta-2; disulfide-linked. In terms of tissue distribution, expressed by the venom gland.

The protein localises to the secreted. Functionally, agglucetin specifically causes platelet aggregation and surface exposure of integrin alpha-IIb/beta-3 with a GPIb-(GP1BA-) dependent manner in washed platelets. It binds to human platelets in a saturable manner, and its binding is specifically blocked by anti-GP Ib mAb. It regulates endothelial cell survival and promotes angiogenesis by activating integrin alpha-v/beta-3 signaling through FAK/phosphatidylinositol 3-kinase (PI3K)/Akt pathway. The chain is Snaclec agglucetin subunit alpha-2 from Deinagkistrodon acutus (Hundred-pace snake).